A 353-amino-acid chain; its full sequence is tRNA N6-adenosine threonylcarbamoyltransferase (353 aa).

Fe cation is bound by residues H109 and H113. Residues 136 to 140 (TVSGG), D169, G182, D186, and N284 contribute to the substrate site. D312 serves as a coordination point for Fe cation.

This sequence belongs to the KAE1 / TsaD family. Fe(2+) serves as cofactor.

The protein localises to the cytoplasm. The enzyme catalyses L-threonylcarbamoyladenylate + adenosine(37) in tRNA = N(6)-L-threonylcarbamoyladenosine(37) in tRNA + AMP + H(+). Required for the formation of a threonylcarbamoyl group on adenosine at position 37 (t(6)A37) in tRNAs that read codons beginning with adenine. Is involved in the transfer of the threonylcarbamoyl moiety of threonylcarbamoyl-AMP (TC-AMP) to the N6 group of A37, together with TsaE and TsaB. TsaD likely plays a direct catalytic role in this reaction. The sequence is that of tRNA N6-adenosine threonylcarbamoyltransferase from Chlorobium limicola (strain DSM 245 / NBRC 103803 / 6330).